The following is a 188-amino-acid chain: ATP synthase subunit b (188 aa).

Residues 19–39 (LPAVYDIVWSAVVFVVLLVVI) form a helical membrane-spanning segment.

The protein belongs to the ATPase B chain family. In terms of assembly, F-type ATPases have 2 components, F(1) - the catalytic core - and F(0) - the membrane proton channel. F(1) has five subunits: alpha(3), beta(3), gamma(1), delta(1), epsilon(1). F(0) has three main subunits: a(1), b(2) and c(10-14). The alpha and beta chains form an alternating ring which encloses part of the gamma chain. F(1) is attached to F(0) by a central stalk formed by the gamma and epsilon chains, while a peripheral stalk is formed by the delta and b chains.

Its subcellular location is the cell membrane. Its function is as follows. F(1)F(0) ATP synthase produces ATP from ADP in the presence of a proton or sodium gradient. F-type ATPases consist of two structural domains, F(1) containing the extramembraneous catalytic core and F(0) containing the membrane proton channel, linked together by a central stalk and a peripheral stalk. During catalysis, ATP synthesis in the catalytic domain of F(1) is coupled via a rotary mechanism of the central stalk subunits to proton translocation. In terms of biological role, component of the F(0) channel, it forms part of the peripheral stalk, linking F(1) to F(0). The protein is ATP synthase subunit b of Clavibacter michiganensis subsp. michiganensis (strain NCPPB 382).